We begin with the raw amino-acid sequence, 94 residues long: DNA-directed RNA polymerase subunit Rpo11 (94 aa).

The protein belongs to the archaeal Rpo11/eukaryotic RPB11/RPC19 RNA polymerase subunit family. In terms of assembly, part of the RNA polymerase complex.

It localises to the cytoplasm. The catalysed reaction is RNA(n) + a ribonucleoside 5'-triphosphate = RNA(n+1) + diphosphate. Its function is as follows. DNA-dependent RNA polymerase (RNAP) catalyzes the transcription of DNA into RNA using the four ribonucleoside triphosphates as substrates. This is DNA-directed RNA polymerase subunit Rpo11 from Natronomonas pharaonis (strain ATCC 35678 / DSM 2160 / CIP 103997 / JCM 8858 / NBRC 14720 / NCIMB 2260 / Gabara) (Halobacterium pharaonis).